The following is a 554-amino-acid chain: Chaperonin GroEL (554 aa).

Residues 29–32, Lys50, 86–90, Gly414, and Asp495 each bind ATP; these read TLGP and DGTTT.

Belongs to the chaperonin (HSP60) family. As to quaternary structure, forms a cylinder of 14 subunits composed of two heptameric rings stacked back-to-back. Interacts with the co-chaperonin GroES.

Its subcellular location is the cytoplasm. The enzyme catalyses ATP + H2O + a folded polypeptide = ADP + phosphate + an unfolded polypeptide.. Functionally, together with its co-chaperonin GroES, plays an essential role in assisting protein folding. The GroEL-GroES system forms a nano-cage that allows encapsulation of the non-native substrate proteins and provides a physical environment optimized to promote and accelerate protein folding. This is Chaperonin GroEL from Pelagibacter ubique (strain HTCC1062).